A 497-amino-acid polypeptide reads, in one-letter code: uncharacterized protein (497 aa).

The interval 474–497 (DPRNPFSNGKPSGWSDEDVAWLKR) is disordered. Residues 488 to 497 (SDEDVAWLKR) are compositionally biased toward acidic residues.

This is an uncharacterized protein from Bacillus anthracis.